We begin with the raw amino-acid sequence, 53 residues long: UPF0391 membrane protein GFO_1615 (53 aa).

2 helical membrane passes run 4–24 (LIVI…GGVA) and 27–47 (AADI…ISVL).

Belongs to the UPF0391 family.

It is found in the cell membrane. The chain is UPF0391 membrane protein GFO_1615 from Christiangramia forsetii (strain DSM 17595 / CGMCC 1.15422 / KT0803) (Gramella forsetii).